A 141-amino-acid polypeptide reads, in one-letter code: Large ribosomal subunit protein uL16 (141 aa).

This sequence belongs to the universal ribosomal protein uL16 family. As to quaternary structure, part of the 50S ribosomal subunit.

In terms of biological role, binds 23S rRNA and is also seen to make contacts with the A and possibly P site tRNAs. This is Large ribosomal subunit protein uL16 from Microchaete diplosiphon (Fremyella diplosiphon).